Here is a 77-residue protein sequence, read N- to C-terminus: Putative defensin-like protein 158 (77 aa).

Residues 1–24 form the signal peptide; that stretch reads MANISWSHFLILMLVFSVVKKGKG. 4 disulfides stabilise this stretch: Cys-31/Cys-77, Cys-41/Cys-60, Cys-46/Cys-71, and Cys-50/Cys-73.

Belongs to the DEFL family.

The protein resides in the secreted. The chain is Putative defensin-like protein 158 (LCR23) from Arabidopsis thaliana (Mouse-ear cress).